The primary structure comprises 523 residues: Tryptophan 6-halogenase SttH (523 aa).

Residues Gly14, Ser40, Ile43, Val46, Val48, and Ala51 each coordinate FAD. Lys79 is a catalytic residue. Position 97 (Pro97) interacts with L-tryptophan. Residues Val203 and Leu354 each coordinate FAD. Positions 365 and 366 each coordinate chloride. Position 367 (Ile367) interacts with FAD. L-tryptophan-binding residues include Tyr456 and Tyr457.

It belongs to the flavin-dependent halogenase family. Bacterial tryptophan halogenase subfamily. In terms of assembly, homodimer.

The enzyme catalyses L-tryptophan + FADH2 + chloride + O2 = 6-chloro-L-tryptophan + FAD + 2 H2O. It carries out the reaction D-tryptophan + FADH2 + chloride + O2 = 6-chloro-D-tryptophan + FAD + 2 H2O. Catalyzes the chlorination of tryptophan (Trp) at C6 position to yield 6-chloro-tryptophan. Accepts both L and D-Trp as the substrates. The enzyme also uses bromide to yield 6-bromo-Trp. In vitro, can also catalyze the halogenation of 3-indolepropionic acid, N-methyltryptophan and non-indolic aromatic substrates such as kynurenine, anthranilamide and N-phenylanthranilic acid. The polypeptide is Tryptophan 6-halogenase SttH (Streptomyces toxytricini (Actinomyces toxytricini)).